Here is a 969-residue protein sequence, read N- to C-terminus: MSTDNSQKDEGVPLLSPYSSSPQLRKKKRNQKRRKDKFVGHLKSDSRRPTQLLHDNLQHNHGQITDFDQIDSWGMLHESDSTSNDIIKSEDPSLKGAFIDHRPSMSQPREGPQSVSSTVQPQPIMKFSTPSYKKPAGLRPSDQNRSLVSDLSPSELESWLKRRKSVHKSFVDENSPTDRRQSNANNDVVIDVDALMNHVNNNASTGVNDNSKRRKKKRGSDDSSNKNSKSTSSDSNDEEDEYNSRPSSSLSSNNSSLDDVCLVLDDEGSEVPKAWPDCTVLEEFSKEETERLRSQAIQDAEAFHFQYDEDEEDGTSNEDGILFSKPIVTNIDVPELGNRRVNETENLKNGRLRPKRIAPWHLIQRPMVLGSNSTKDSKSRIQSGLQDNLLVGRNIQYPPHIISNNPEHFRFTYFRVDLDSTVHSPTISGLLQPGQKFQDLFVASIYSQDNSAGHIKTHPNSPTPGIKAETVSQLQGLTAKNPSTLSSMSVANIEDVPPFWLDVSNPTEEEMKILSKAFGIHPLTTEDIFLGEVREKVELFRDYYLICFRSFDIVAEKHVRRRRKEKQESATLDHESISRRKSQAYGATMSNESNANNNNSTSNASRSKWLPSILRARRRSSANRTTNTSSSSYKRRVKSEKKKMEENEKFKRKSGDRHKPREGELEPLNVYIIVFRTGVLTFHFAPTPHPINVRRRARLLKDYLNVTSDWIAYALIDDITDAFAPMIELIEDEVYEIEDAILKMHQSDDSSDSDSSDSDSDSGASDEDAFPFDVYSKKTSYSSAKSSVSSRSMSTSEASFNANLIGWKRKGDMLRRIGECRKRVMSILRLLGSKADVIKGFAKRYNEQWEASPQSEIAMYLGDIQDHIVTMVSSLNHYEKLLSRSHSNYLAQINIDMTKVNNDMNDVLGKITILGTIVLPMNVITGLWGMNVIVPGQYRDSLTWFIGIVLFMCMLACSAYMYTKRRFGF.

A compositionally biased stretch (basic and acidic residues) spans 1 to 11; it reads MSTDNSQKDEG. Disordered regions lie at residues 1–49, 96–153, 167–186, and 199–256; these read MSTD…SRRP, GAFI…DLSP, HKSFVDENSPTDRRQSNANN, and VNNN…NNSS. At 1–912 the chain is on the cytoplasmic side; that stretch reads MSTDNSQKDE…DMNDVLGKIT (912 aa). A compositionally biased stretch (low complexity) spans 13-23; sequence PLLSPYSSSPQ. Basic residues predominate over residues 24-36; the sequence is LRKKKRNQKRRKD. The span at 37 to 48 shows a compositional bias: basic and acidic residues; the sequence is KFVGHLKSDSRR. Ser-114 is subject to Phosphoserine. Positions 141-152 are enriched in polar residues; it reads SDQNRSLVSDLS. Ser-175 bears the Phosphoserine mark. The residue at position 177 (Thr-177) is a Phosphothreonine. Ser-182 is subject to Phosphoserine. 2 stretches are compositionally biased toward low complexity: residues 225 to 234 and 244 to 256; these read NKNSKSTSSD and SRPSSSLSSNNSS. The residue at position 383 (Ser-383) is a Phosphoserine. 2 disordered regions span residues 559–662 and 746–769; these read VRRR…KPRE and QSDDSSDSDSSDSDSDSGASDEDA. Residues 565 to 578 show a composition bias toward basic and acidic residues; it reads EKQESATLDHESIS. Thr-571 is modified (phosphothreonine). Phosphoserine occurs at positions 576 and 582. Composition is skewed to low complexity over residues 590-607 and 622-632; these read SNESNANNNNSTSNASRS and ANRTTNTSSSS. The span at 749–769 shows a compositional bias: acidic residues; that stretch reads DSSDSDSSDSDSDSGASDEDA. Residues 913–933 form a helical membrane-spanning segment; sequence ILGTIVLPMNVITGLWGMNVI. At 934–941 the chain is on the extracellular side; that stretch reads VPGQYRDS. The helical transmembrane segment at 942–962 threads the bilayer; that stretch reads LTWFIGIVLFMCMLACSAYMY. Over 963 to 969 the chain is Cytoplasmic; the sequence is TKRRFGF.

This sequence belongs to the CorA metal ion transporter (MIT) (TC 1.A.35) family.

The protein resides in the membrane. This Saccharomyces cerevisiae (strain ATCC 204508 / S288c) (Baker's yeast) protein is Manganese resistance protein MNR2 (MNR2).